Consider the following 277-residue polypeptide: Methylglyoxal reductase DkgA (277 aa).

The active-site Proton donor is the Y51. Residue H107 participates in substrate binding. 187 to 241 is a binding site for NADP(+); the sequence is SPLAQGGKGVFDQEIIRKLAQQYNKTPAQIVIRWHLDSGLIVIPKSVTPARIREN.

The protein belongs to the aldo/keto reductase family. As to quaternary structure, monomer.

It localises to the cytoplasm. The enzyme catalyses hydroxyacetone + NADP(+) = methylglyoxal + NADPH + H(+). In terms of biological role, aldo-keto reductase that significantly contributes to cellular methylglyoxal detoxification by catalyzing the NADPH-dependent conversion of methylglyoxal to acetol. This Yersinia pestis protein is Methylglyoxal reductase DkgA.